The primary structure comprises 159 residues: NADH-quinone oxidoreductase subunit I (159 aa).

4Fe-4S ferredoxin-type domains follow at residues 51–80 (RRYE…IEAD) and 90–119 (TRYD…EGPN). The [4Fe-4S] cluster site is built by C60, C63, C66, C70, C99, C102, C105, and C109.

It belongs to the complex I 23 kDa subunit family. In terms of assembly, NDH-1 is composed of 14 different subunits. Subunits NuoA, H, J, K, L, M, N constitute the membrane sector of the complex. Requires [4Fe-4S] cluster as cofactor.

It localises to the cell inner membrane. The catalysed reaction is a quinone + NADH + 5 H(+)(in) = a quinol + NAD(+) + 4 H(+)(out). In terms of biological role, NDH-1 shuttles electrons from NADH, via FMN and iron-sulfur (Fe-S) centers, to quinones in the respiratory chain. The immediate electron acceptor for the enzyme in this species is believed to be ubiquinone. Couples the redox reaction to proton translocation (for every two electrons transferred, four hydrogen ions are translocated across the cytoplasmic membrane), and thus conserves the redox energy in a proton gradient. This chain is NADH-quinone oxidoreductase subunit I, found in Rickettsia peacockii (strain Rustic).